The chain runs to 184 residues: dITP/XTP pyrophosphatase (184 aa).

8-13 (TGNKGK) contributes to the substrate binding site. Residues E37 and D66 each coordinate Mg(2+). D66 acts as the Proton acceptor in catalysis. Substrate contacts are provided by residues S67, 142–145 (FGYD), K163, and 168–169 (HR).

It belongs to the HAM1 NTPase family. As to quaternary structure, homodimer. Mg(2+) serves as cofactor.

The catalysed reaction is XTP + H2O = XMP + diphosphate + H(+). The enzyme catalyses dITP + H2O = dIMP + diphosphate + H(+). It carries out the reaction ITP + H2O = IMP + diphosphate + H(+). Pyrophosphatase that catalyzes the hydrolysis of nucleoside triphosphates to their monophosphate derivatives, with a high preference for the non-canonical purine nucleotides XTP (xanthosine triphosphate), dITP (deoxyinosine triphosphate) and ITP. Seems to function as a house-cleaning enzyme that removes non-canonical purine nucleotides from the nucleotide pool, thus preventing their incorporation into DNA/RNA and avoiding chromosomal lesions. This Methanosarcina acetivorans (strain ATCC 35395 / DSM 2834 / JCM 12185 / C2A) protein is dITP/XTP pyrophosphatase.